Here is a 281-residue protein sequence, read N- to C-terminus: Para-Rep C9 (281 aa).

In terms of domain architecture, CRESS-DNA virus Rep endonuclease spans 1-95 (MSAVNWVFTL…VAGPWSYGEL (95 aa)). The RCR-1 motif lies at 7–10 (VFTL). The a divalent metal cation site is built by Glu-33 and His-39. Positions 39–41 (HIQ) match the RCR-2 motif. Residues 48 to 69 (KKAKMNTVKNIIGGNPHLEKMK) carry the Nuclear localization signal motif. Tyr-78 (for DNA cleavage activity) is an active-site residue. Residues 78-81 (YAQK) carry the RCR-3 motif. Glu-83 provides a ligand contact to a divalent metal cation. The Nuclear localization signal signature appears at 95–101 (LLKKGSH). 178-180 (GKS) is an ATP binding site.

Belongs to the nanoviridea/circoviridae replication-associated protein family. Homooligomer (Potential). Rep binds to repeated DNA motifs (iterons). Requires Mg(2+) as cofactor. Mn(2+) is required as a cofactor.

Its subcellular location is the host nucleus. It carries out the reaction ATP + H2O = ADP + phosphate + H(+). In terms of biological role, initiates and terminates the replication only of its own subviral DNA molecule. The closed circular ssDNA genome is first converted to a superhelical dsDNA. Rep binds a specific hairpin at the genome origin of replication. Introduces an endonucleolytic nick within the intergenic region of the genome, thereby initiating the rolling circle replication (RCR). Following cleavage, binds covalently to the 5'-phosphate of DNA as a tyrosyl ester. The cleavage gives rise to a free 3'-OH that serves as a primer for the cellular DNA polymerase. The polymerase synthesizes the (+) strand DNA by rolling circle mechanism. After one round of replication, a Rep-catalyzed nucleotidyl transfer reaction releases a circular single-stranded virus genome, thereby terminating the replication. Displays origin-specific DNA cleavage, nucleotidyl transferase, ATPase and helicase activities. In Faba bean necrotic yellows C9 alphasatellite (FBNYC9A), this protein is Para-Rep C9 (C9).